The primary structure comprises 197 residues: uncharacterized protein (197 aa).

2 disordered regions span residues 1-30 (MSDD…PKVV) and 115-174 (PSLK…KQEL). Over residues 21–30 (KPTSTTPKVV) the composition is skewed to low complexity. The segment covering 123-137 (KVDEDDDQIYEDKEE) has biased composition (acidic residues). A compositionally biased stretch (basic residues) spans 157-170 (KSNKKVAPKQKKKS).

This is an uncharacterized protein from Dictyostelium discoideum (Social amoeba).